We begin with the raw amino-acid sequence, 316 residues long: KRR1 small subunit processome component (316 aa).

The KH domain occupies 122–192 (ACDVIKIGNF…VRRVVEDCMK (71 aa)). Residues 279–304 (KKLNEQKEKQMEREIERQEERAKDFI) are compositionally biased toward basic and acidic residues. Residues 279–316 (KKLNEQKEKQMEREIERQEERAKDFIAPEEEAYKPNQN) are disordered.

The protein belongs to the KRR1 family. In terms of assembly, component of the ribosomal small subunit (SSU) processome composed of at least 40 protein subunits and snoRNA U3. Interacts with snoRNA U3. Interacts with MPP10, KRI1 and with ribosomal proteins RPS1A, RPS4A, RPS4B, RPS8A, RPS8B, RPS11A, RPS11B, RPS13, RPS24, RPS25, RPL4A, RPL7B, RPL8, RPL23, RPL25 and RPL28.

It localises to the nucleus. It is found in the nucleolus. Functionally, required for 40S ribosome biogenesis. Involved in nucleolar processing of pre-18S ribosomal RNA and ribosome assembly. Essential for vegetative growth. The chain is KRR1 small subunit processome component from Saccharomyces cerevisiae (strain RM11-1a) (Baker's yeast).